Reading from the N-terminus, the 96-residue chain is ESAT-6-like protein EsxH (96 aa).

Residues H14, H70, H76, and E77 each coordinate Zn(2+).

It belongs to the WXG100 family. ESAT-6 subfamily. In terms of assembly, forms a tight 1:1 complex with EsxG. When it is complexed to EsxG, interacts directly with host HGS/HRS.

The protein resides in the secreted. Functionally, esxH, in complex with EsxG, disrupts ESCRT function and impairs host phagosome maturation, thereby promoting intracellular bacterial growth. The complex acts by interacting, via EsxH, with the host hepatocyte growth factor-regulated tyrosine kinase substrate (HGS/HRS), a component of the ESCRT machinery. The sequence is that of ESAT-6-like protein EsxH from Mycobacterium tuberculosis (strain ATCC 25618 / H37Rv).